The sequence spans 287 residues: Phosphatidylglycerol--prolipoprotein diacylglyceryl transferase (287 aa).

4 consecutive transmembrane segments (helical) span residues 15–35, 55–75, 90–110, and 117–137; these read IGPL…ILAI, FVMF…VFFE, IWEG…TAIV, and VSFW…QAIG. An a 1,2-diacyl-sn-glycero-3-phospho-(1'-sn-glycerol)-binding site is contributed by Arg-138. Helical transmembrane passes span 180-200 and 238-258; these read HPTF…LLLL and IIRT…IFII.

It belongs to the Lgt family.

Its subcellular location is the cell membrane. The enzyme catalyses L-cysteinyl-[prolipoprotein] + a 1,2-diacyl-sn-glycero-3-phospho-(1'-sn-glycerol) = an S-1,2-diacyl-sn-glyceryl-L-cysteinyl-[prolipoprotein] + sn-glycerol 1-phosphate + H(+). The protein operates within protein modification; lipoprotein biosynthesis (diacylglyceryl transfer). In terms of biological role, catalyzes the transfer of the diacylglyceryl group from phosphatidylglycerol to the sulfhydryl group of the N-terminal cysteine of a prolipoprotein, the first step in the formation of mature lipoproteins. The polypeptide is Phosphatidylglycerol--prolipoprotein diacylglyceryl transferase (Oceanobacillus iheyensis (strain DSM 14371 / CIP 107618 / JCM 11309 / KCTC 3954 / HTE831)).